Reading from the N-terminus, the 362-residue chain is MSDDTEDDSGGESTADMEFGEQPAPLGVKVGSTRTVVAEDDADSPSVTQTLTCLATYDDALTGEEHVIYGAEAATEYPDRVRFMLRSGLPEDEETTGLAKRFFEEFASANGLDTDSVVVYAIPTIDNEAGLDRLAEIIEDGPVGERRIASYPESLCGAVPALGDGLDAIEDTFVAINMGSTNLEACAYRRGEQLAPFSTGAITGTEVDRRIANYVEEETQGRVNIDLTTAREYKEQHADFNDYEPFSDIIQQPGGGTYEFTIEDAVMDAVDEFVDAAVDEVANVFLPDLASDYVKIYQQALDNPIVLTGGMGCIPGIVSEFETRLGEEIDREVEATTADEPETAAARGAHRIAERLVDLGEY.

Positions Met1–Gly10 are enriched in acidic residues. The segment at Met1–Val28 is disordered.

In terms of assembly, forms dynamically unstable filaments. Monomers are added at the growing filament end. In vitro, salactin polymerizes in the presence of ATP and AMP-PNP but not in the presence of ADP, GTP, ATPgammaS or buffer alone.

Its subcellular location is the cytoplasm. Actin homolog which might be involved in partitioning DNA between daughter cells when chromosomal copy number is low. This is Salactin from Halobacterium salinarum (strain ATCC 700922 / JCM 11081 / NRC-1) (Halobacterium halobium).